A 545-amino-acid polypeptide reads, in one-letter code: Chaperonin GroEL 1 (545 aa).

ATP is bound by residues 29–32, 86–90, glycine 413, 477–479, and aspartate 493; these read TLGP, DGTTT, and NAA.

Belongs to the chaperonin (HSP60) family. Forms a cylinder of 14 subunits composed of two heptameric rings stacked back-to-back. Interacts with the co-chaperonin GroES.

The protein localises to the cytoplasm. It catalyses the reaction ATP + H2O + a folded polypeptide = ADP + phosphate + an unfolded polypeptide.. Functionally, together with its co-chaperonin GroES, plays an essential role in assisting protein folding. The GroEL-GroES system forms a nano-cage that allows encapsulation of the non-native substrate proteins and provides a physical environment optimized to promote and accelerate protein folding. This Arthrobacter sp. (strain FB24) protein is Chaperonin GroEL 1.